The primary structure comprises 77 residues: Chassatide C2 (77 aa).

Positions methionine 1–serine 24 are cleaved as a signal peptide. A propeptide spans serine 25 to asparagine 44 (removed in mature form). A cross-link (cyclopeptide (Gly-Asn)) is located at residues glycine 45–asparagine 75. Disulfide bonds link cysteine 48–cysteine 65, cysteine 52–cysteine 67, and cysteine 57–cysteine 72. Residue methionine 63 is modified to Methionine sulfoxide; in form chassatide chaC2A. Positions glutamate 76 to leucine 77 are cleaved as a propeptide — removed in mature form.

Belongs to the cyclotide family. Bracelet subfamily. Post-translationally, this is a cyclic peptide. Expressed in fruit, pedicel and stem but not in leaf and root (at protein level).

Functionally, chassatide C2: Probably participates in a plant defense mechanism. Has no activity against bacteria up to a concentration of 80 uM. Has cytotoxic but no hemolytic activity. In terms of biological role, chassatide C2A: Probably participates in a plant defense mechanism. Has no activity against bacteria up to a concentration of 80 uM. Has no cytotoxic and no hemolytic activity. The protein is Chassatide C2 of Chassalia chartacea (Chassalia curviflora).